We begin with the raw amino-acid sequence, 336 residues long: Phosphate acyltransferase (336 aa).

It belongs to the PlsX family. In terms of assembly, homodimer. Probably interacts with PlsY.

Its subcellular location is the cytoplasm. It carries out the reaction a fatty acyl-[ACP] + phosphate = an acyl phosphate + holo-[ACP]. It participates in lipid metabolism; phospholipid metabolism. Catalyzes the reversible formation of acyl-phosphate (acyl-PO(4)) from acyl-[acyl-carrier-protein] (acyl-ACP). This enzyme utilizes acyl-ACP as fatty acyl donor, but not acyl-CoA. In Pseudomonas putida (strain ATCC 47054 / DSM 6125 / CFBP 8728 / NCIMB 11950 / KT2440), this protein is Phosphate acyltransferase.